The primary structure comprises 118 residues: V-type proton ATPase subunit G 2 (118 aa).

The interval 23–90 is disordered; it reads ADARKRKARR…VQGMQSSQQR (68 aa). A compositionally biased stretch (basic and acidic residues) spans 35 to 55; the sequence is QAKEEAQMEVEQYRREREQEF. Composition is skewed to polar residues over residues 56–69 and 78–89; these read QSKQ…QGNL and RRQVQGMQSSQQ.

It belongs to the V-ATPase G subunit family. As to quaternary structure, V-ATPase is a heteromultimeric enzyme made up of two complexes: the ATP-hydrolytic V1 complex and the proton translocation V0 complex. The V1 complex consists of three catalytic AB heterodimers that form a heterohexamer, three peripheral stalks each consisting of EG heterodimers, one central rotor including subunits D and F, and the regulatory subunits C and H. The proton translocation complex V0 consists of the proton transport subunit a, a ring of proteolipid subunits c9c'', rotary subunit d, subunits e and f, and the accessory subunits ATP6AP1/Ac45 and ATP6AP2/PRR.

The protein localises to the melanosome. It is found in the cytoplasmic vesicle. It localises to the clathrin-coated vesicle membrane. In terms of biological role, subunit of the V1 complex of vacuolar(H+)-ATPase (V-ATPase), a multisubunit enzyme composed of a peripheral complex (V1) that hydrolyzes ATP and a membrane integral complex (V0) that translocates protons. V-ATPase is responsible for acidifying and maintaining the pH of intracellular compartments and in some cell types, is targeted to the plasma membrane, where it is responsible for acidifying the extracellular environment. The chain is V-type proton ATPase subunit G 2 (ATP6V1G2) from Macaca mulatta (Rhesus macaque).